The following is a 260-amino-acid chain: GDNF family receptor alpha-4 (260 aa).

Residues 1–23 form the signal peptide; the sequence is MAHCMESALLLLLLLGSASFTDG. Asn-184 is a glycosylation site (N-linked (GlcNAc...) asparagine). The GPI-anchor amidated threonine moiety is linked to residue Thr-237. A propeptide spans 238–260 (removed in mature form); it reads AGCCFPRVSWLYALTALALQALL.

This sequence belongs to the GDNFR family. As to quaternary structure, interacts with ARTN ligand and RET: forms a 2:2:2 ternary complex composed of ARTN ligand, GFRA3 and RET receptor. Interacts with SORL1. In terms of tissue distribution, expressed in many tissues including adrenal medulla, brain neurons, with highest levels in the cerebral cortex and hippocampus. Moderate levels found in the gut circular muscle and myenteric ganglia as well as in other peripheral ganglia, including the sensory dorsal root and trigeminal as well as superior cervical and sympathetic chain ganglia. Isoform a1, isoform a2, isoform b1 and isoform b2 are exclusively found in the thyroid, parthyroid and pituitary glands.

The protein localises to the cell membrane. It is found in the secreted. Functionally, receptor for persephin (PSPN), a growth factor that exhibits neurotrophic activity on mesencephalic dopaminergic and motor neurons. Acts by binding to its coreceptor, GFRA4, leading to autophosphorylation and activation of the RET receptor. May be important in C-cell development and, in the postnatal development of the adrenal medulla. The chain is GDNF family receptor alpha-4 (Gfra4) from Mus musculus (Mouse).